Here is a 231-residue protein sequence, read N- to C-terminus: Glutathione-specific gamma-glutamylcyclotransferase (231 aa).

49-54 contributes to the substrate binding site; the sequence is IFGYGS. Catalysis depends on Glu127, which acts as the Proton acceptor.

This sequence belongs to the gamma-glutamylcyclotransferase family. ChaC subfamily.

The catalysed reaction is glutathione = L-cysteinylglycine + 5-oxo-L-proline. Catalyzes the cleavage of glutathione into 5-oxo-L-proline and a Cys-Gly dipeptide. Acts specifically on glutathione, but not on other gamma-glutamyl peptides. In Escherichia coli (strain K12), this protein is Glutathione-specific gamma-glutamylcyclotransferase.